We begin with the raw amino-acid sequence, 159 residues long: 2-C-methyl-D-erythritol 2,4-cyclodiphosphate synthase (159 aa).

A divalent metal cation-binding residues include aspartate 10 and histidine 12. Residues aspartate 10–histidine 12 and histidine 36–serine 37 contribute to the 4-CDP-2-C-methyl-D-erythritol 2-phosphate site. Histidine 44 contributes to the a divalent metal cation binding site. 4-CDP-2-C-methyl-D-erythritol 2-phosphate is bound by residues aspartate 58 to glycine 60, phenylalanine 63 to aspartate 67, alanine 102 to alanine 108, threonine 134 to glutamate 137, phenylalanine 141, and arginine 144.

This sequence belongs to the IspF family. As to quaternary structure, homotrimer. The cofactor is a divalent metal cation.

It carries out the reaction 4-CDP-2-C-methyl-D-erythritol 2-phosphate = 2-C-methyl-D-erythritol 2,4-cyclic diphosphate + CMP. The protein operates within isoprenoid biosynthesis; isopentenyl diphosphate biosynthesis via DXP pathway; isopentenyl diphosphate from 1-deoxy-D-xylulose 5-phosphate: step 4/6. In terms of biological role, involved in the biosynthesis of isopentenyl diphosphate (IPP) and dimethylallyl diphosphate (DMAPP), two major building blocks of isoprenoid compounds. Catalyzes the conversion of 4-diphosphocytidyl-2-C-methyl-D-erythritol 2-phosphate (CDP-ME2P) to 2-C-methyl-D-erythritol 2,4-cyclodiphosphate (ME-CPP) with a corresponding release of cytidine 5-monophosphate (CMP). The sequence is that of 2-C-methyl-D-erythritol 2,4-cyclodiphosphate synthase from Shewanella woodyi (strain ATCC 51908 / MS32).